We begin with the raw amino-acid sequence, 252 residues long: Transcriptional regulatory protein HptR (252 aa).

In terms of domain architecture, Response regulatory spans 3–118 (KVVICDDERI…QLEVILGRLV (116 aa)). At Asp55 the chain carries 4-aspartylphosphate. Residues 153-250 (NQIVDQIKQS…QMSPSDYCKQ (98 aa)) enclose the HTH araC/xylS-type domain. 2 DNA-binding regions (H-T-H motif) span residues 170–191 (SDLI…KDHV) and 217–240 (HYEI…KKYL).

Phosphorylated by HptS.

Its subcellular location is the cytoplasm. Its function is as follows. Member of the two-component regulatory system HptS/HptR that regulates genes involved in hexose phosphate transport system in response to changes in extracellular phosphate sources. Activates uhpT expression to facilitate glucose-6-phosphate/G6P utilization by directly binding to its promoter. Antagonizes CcpA-dependent transcription of a subset of CcpA-regulated genes involved in antibiotic susceptibility. This Staphylococcus aureus (strain MRSA252) protein is Transcriptional regulatory protein HptR (hptR).